The primary structure comprises 488 residues: Glutamyl-tRNA(Gln) amidotransferase subunit B, mitochondrial (488 aa).

Belongs to the GatB/GatE family. GatB subfamily. Subunit of the heterotrimeric GatFAB amidotransferase (AdT) complex, composed of A, B and F subunits.

Its subcellular location is the mitochondrion. It carries out the reaction L-glutamyl-tRNA(Gln) + L-glutamine + ATP + H2O = L-glutaminyl-tRNA(Gln) + L-glutamate + ADP + phosphate + H(+). Allows the formation of correctly charged Gln-tRNA(Gln) through the transamidation of misacylated Glu-tRNA(Gln) in the mitochondria. The reaction takes place in the presence of glutamine and ATP through an activated gamma-phospho-Glu-tRNA(Gln). This chain is Glutamyl-tRNA(Gln) amidotransferase subunit B, mitochondrial, found in Candida albicans (strain WO-1) (Yeast).